A 150-amino-acid chain; its full sequence is Peptide deformylase 1 (150 aa).

Positions 88 and 130 each coordinate Fe cation. E131 is an active-site residue. H134 lines the Fe cation pocket.

This sequence belongs to the polypeptide deformylase family. It depends on Fe(2+) as a cofactor.

It catalyses the reaction N-terminal N-formyl-L-methionyl-[peptide] + H2O = N-terminal L-methionyl-[peptide] + formate. Functionally, removes the formyl group from the N-terminal Met of newly synthesized proteins. Requires at least a dipeptide for an efficient rate of reaction. N-terminal L-methionine is a prerequisite for activity but the enzyme has broad specificity at other positions. This Clostridium acetobutylicum (strain ATCC 824 / DSM 792 / JCM 1419 / IAM 19013 / LMG 5710 / NBRC 13948 / NRRL B-527 / VKM B-1787 / 2291 / W) protein is Peptide deformylase 1.